The sequence spans 158 residues: Regulator of sigma D (158 aa).

Belongs to the Rsd/AlgQ family. As to quaternary structure, interacts with RpoD.

Its subcellular location is the cytoplasm. Functionally, binds RpoD and negatively regulates RpoD-mediated transcription activation by preventing the interaction between the primary sigma factor RpoD with the catalytic core of the RNA polymerase and with promoter DNA. May be involved in replacement of the RNA polymerase sigma subunit from RpoD to RpoS during the transition from exponential growth to the stationary phase. This chain is Regulator of sigma D, found in Escherichia coli (strain SMS-3-5 / SECEC).